The sequence spans 236 residues: Mitochondrial coenzyme A diphosphatase NUDT8 (236 aa).

Residues 25–172 (LRARPASAAV…HFRYTLPVFL (148 aa)) form the Nudix hydrolase domain. At lysine 70 the chain carries N6-succinyllysine. A Nudix box motif is present at residues 70 to 91 (KCDPADQDVVHTALRETREELG). Mg(2+)-binding residues include glutamate 85 and glutamate 89.

Belongs to the Nudix hydrolase family. As to quaternary structure, monomer. Mg(2+) is required as a cofactor. It depends on Mn(2+) as a cofactor.

It is found in the mitochondrion. It carries out the reaction an acyl-CoA + H2O = an acyl-4'-phosphopantetheine + adenosine 3',5'-bisphosphate + 2 H(+). The catalysed reaction is CoA + H2O = (R)-4'-phosphopantetheine + adenosine 3',5'-bisphosphate + 2 H(+). It catalyses the reaction acetyl-CoA + H2O = S-acetyl-4'-phosphopantetheine + adenosine 3',5'-bisphosphate + 2 H(+). The enzyme catalyses butanoyl-CoA + H2O = S-butanoyl-4'-phosphopantetheine + adenosine 3',5'-bisphosphate + 2 H(+). It carries out the reaction hexanoyl-CoA + H2O = hexanoyl-4'-phosphopantetheine + adenosine 3',5'-bisphosphate + 2 H(+). The catalysed reaction is octanoyl-CoA + H2O = S-octanoyl-4'-phosphopantetheine + adenosine 3',5'-bisphosphate + 2 H(+). It catalyses the reaction propanoyl-CoA + H2O = propanoyl-4'-phosphopantetheine + adenosine 3',5'-bisphosphate + 2 H(+). The enzyme catalyses malonyl-CoA + H2O = malonyl-4'-phosphopantetheine + adenosine 3',5'-bisphosphate + 2 H(+). It carries out the reaction succinyl-CoA + H2O = succinyl-4'-phosphopantetheine + adenosine 3',5'-bisphosphate + 2 H(+). The catalysed reaction is a 5'-end CoA-ribonucleoside in mRNA + H2O = a 5'-end phospho-adenosine-phospho-ribonucleoside in mRNA + (R)-4'-phosphopantetheine + 2 H(+). Acyl-CoA diphosphatase that mediates the hydrolysis of a wide range of CoA and CoA esters yielding 3',5'-ADP and the corresponding 4'-phosphopantetheine derivative as products. Hydrolyzes short- and medium-chain acyl-CoAs, exhibiting the highest activity toward free CoA, hexanoyl-CoA, and octanoyl-CoA and the lowest activity against acetyl-CoA. Exhibits decapping activity towards dpCoA-capped RNAs in vitro. The sequence is that of Mitochondrial coenzyme A diphosphatase NUDT8 (NUDT8) from Homo sapiens (Human).